Consider the following 115-residue polypeptide: Holo-[acyl-carrier-protein] synthase (115 aa).

Mg(2+)-binding residues include D8 and E50.

It belongs to the P-Pant transferase superfamily. AcpS family. Mg(2+) serves as cofactor.

Its subcellular location is the cytoplasm. It catalyses the reaction apo-[ACP] + CoA = holo-[ACP] + adenosine 3',5'-bisphosphate + H(+). Functionally, transfers the 4'-phosphopantetheine moiety from coenzyme A to a Ser of acyl-carrier-protein. In Cutibacterium acnes (strain DSM 16379 / KPA171202) (Propionibacterium acnes), this protein is Holo-[acyl-carrier-protein] synthase.